We begin with the raw amino-acid sequence, 284 residues long: Ribosomal RNA small subunit methyltransferase A (284 aa).

Residues N26, L28, G53, E74, D97, and N127 each coordinate S-adenosyl-L-methionine.

This sequence belongs to the class I-like SAM-binding methyltransferase superfamily. rRNA adenine N(6)-methyltransferase family. RsmA subfamily.

It is found in the cytoplasm. The catalysed reaction is adenosine(1518)/adenosine(1519) in 16S rRNA + 4 S-adenosyl-L-methionine = N(6)-dimethyladenosine(1518)/N(6)-dimethyladenosine(1519) in 16S rRNA + 4 S-adenosyl-L-homocysteine + 4 H(+). Functionally, specifically dimethylates two adjacent adenosines (A1518 and A1519) in the loop of a conserved hairpin near the 3'-end of 16S rRNA in the 30S particle. May play a critical role in biogenesis of 30S subunits. This Anaeromyxobacter dehalogenans (strain 2CP-C) protein is Ribosomal RNA small subunit methyltransferase A.